The sequence spans 735 residues: MAGDKQGDKQAETTSVPAEARERHAQLAEQIEEHRFRYYVNDAPVVSDAEFDRLLRTLEELEERHPELRTPESPTQKVAGAYATEFTAVQHPTRMLSLDNTFNDDELAAWFERIARELGEQEYHFLCELKVDGLAVNLTYERGRLVRAATRGDGRTGEDITPNVRTIAEIPDRLAGDKVPDLVEIRGEVYFPMEKFQELNARLNEAGDKPFANARNAAAGSLRQKDPRVTASRPLHMVVHGIGTLEGYSGLTRLSQAYDLLKAWGLPTSPHNRVVDGLDGVREFIAYYGENRHSVAHEIDGVVVKVDEIRLQGRLGSTARAPRWAIAYKYAPEEVNTKLVDIKVGVGRTGRVTPYAQVEPVTVAGSEVEFATLHNQEVVKAKGVLIGDTVVLRKAGDVIPEILGPVADLRDGSEREFVMPAECPECGTPLKAMKEGDIDLRCPNARACPAQLRERVAYLAGRECLDIEHFGGVVAAALTGPLEPSEPPLVDEGDLFDLTVEKLLPIKAYVLDPDSGLPKRDPKTGEEKIATVFANKEGEPKKNTLALLQHIEEAKTRPLARFINGLSIRYVGPVAAQALAREFRSIDRIEQATEEELASTDGVGGAIATAVKEWFAVDWHREIVRKWKAAGVPLEDRSTGEDEGPRPLEGLTVVVTGTLENFTRDGAKEALQSRGAKVTGSVSKKTSFVVVGDNPGSKYDKAMQLKVPVLNEDGFAVLLEQGPEAAADVALSAEE.

Over residues 1–11 (MAGDKQGDKQA) the composition is skewed to basic and acidic residues. Residues 1-23 (MAGDKQGDKQAETTSVPAEARER) are disordered. Residues 48-52 (DAEFD), 97-98 (SL), and glutamate 128 contribute to the NAD(+) site. Lysine 130 (N6-AMP-lysine intermediate) is an active-site residue. NAD(+) is bound by residues arginine 151, glutamate 188, lysine 305, and lysine 329. Residues cysteine 423, cysteine 426, cysteine 442, and cysteine 448 each coordinate Zn(2+). One can recognise a BRCT domain in the interval 643–732 (EGPRPLEGLT…PEAAADVALS (90 aa)).

This sequence belongs to the NAD-dependent DNA ligase family. LigA subfamily. The cofactor is Mg(2+). Mn(2+) is required as a cofactor.

It carries out the reaction NAD(+) + (deoxyribonucleotide)n-3'-hydroxyl + 5'-phospho-(deoxyribonucleotide)m = (deoxyribonucleotide)n+m + AMP + beta-nicotinamide D-nucleotide.. In terms of biological role, DNA ligase that catalyzes the formation of phosphodiester linkages between 5'-phosphoryl and 3'-hydroxyl groups in double-stranded DNA using NAD as a coenzyme and as the energy source for the reaction. It is essential for DNA replication and repair of damaged DNA. This chain is DNA ligase 1, found in Streptomyces coelicolor (strain ATCC BAA-471 / A3(2) / M145).